Consider the following 428-residue polypeptide: Dihydroorotase (428 aa).

Positions 59 and 61 each coordinate Zn(2+). Substrate-binding positions include 61 to 63 (HFR) and Asn-93. Residues Asp-151, His-178, and His-231 each coordinate Zn(2+). Residue Asn-277 coordinates substrate. Asp-304 is a binding site for Zn(2+). The active site involves Asp-304. Substrate contacts are provided by residues His-308 and 322–323 (FG).

It belongs to the metallo-dependent hydrolases superfamily. DHOase family. Class I DHOase subfamily. Zn(2+) serves as cofactor.

It carries out the reaction (S)-dihydroorotate + H2O = N-carbamoyl-L-aspartate + H(+). It functions in the pathway pyrimidine metabolism; UMP biosynthesis via de novo pathway; (S)-dihydroorotate from bicarbonate: step 3/3. In terms of biological role, catalyzes the reversible cyclization of carbamoyl aspartate to dihydroorotate. In Bacillus licheniformis (strain ATCC 14580 / DSM 13 / JCM 2505 / CCUG 7422 / NBRC 12200 / NCIMB 9375 / NCTC 10341 / NRRL NRS-1264 / Gibson 46), this protein is Dihydroorotase.